A 508-amino-acid chain; its full sequence is Lysine--tRNA ligase (508 aa).

Mg(2+) is bound by residues E418 and E425.

It belongs to the class-II aminoacyl-tRNA synthetase family. As to quaternary structure, homodimer. Mg(2+) serves as cofactor.

It localises to the cytoplasm. The enzyme catalyses tRNA(Lys) + L-lysine + ATP = L-lysyl-tRNA(Lys) + AMP + diphosphate. The chain is Lysine--tRNA ligase from Burkholderia vietnamiensis (strain G4 / LMG 22486) (Burkholderia cepacia (strain R1808)).